A 199-amino-acid polypeptide reads, in one-letter code: Probable GTP-binding protein EngB (199 aa).

Positions 24–197 constitute an EngB-type G domain; that stretch reads EGYEVIFAGR…GARLNTFFGY (174 aa). GTP is bound by residues 32 to 39, 59 to 63, 77 to 80, 144 to 147, and 176 to 178; these read GRSNAGKS, GKTQH, DLPG, TKSD, and FSS. Residues Ser-39 and Thr-61 each coordinate Mg(2+).

Belongs to the TRAFAC class TrmE-Era-EngA-EngB-Septin-like GTPase superfamily. EngB GTPase family. Mg(2+) is required as a cofactor.

Necessary for normal cell division and for the maintenance of normal septation. In Ruthia magnifica subsp. Calyptogena magnifica, this protein is Probable GTP-binding protein EngB.